A 398-amino-acid polypeptide reads, in one-letter code: Small ribosomal subunit protein mS29 (398 aa).

The transit peptide at Met1–Phe21 directs the protein to the mitochondrion. Positions Gln39 to His67 are disordered. The span at Asn52–Gln66 shows a compositional bias: basic and acidic residues. GTP-binding positions include Met100 and Gly128–Thr135. N6-acetyllysine is present on residues Lys175 and Lys207.

Belongs to the mitochondrion-specific ribosomal protein mS29 family. In terms of assembly, component of the mitochondrial small ribosomal subunit (mt-SSU). Mature mammalian 55S mitochondrial ribosomes consist of a small (28S) and a large (39S) subunit. The 28S small subunit contains a 12S ribosomal RNA (12S mt-rRNA) and 30 different proteins. The 39S large subunit contains a 16S rRNA (16S mt-rRNA), a copy of mitochondrial valine transfer RNA (mt-tRNA(Val)), which plays an integral structural role, and 52 different proteins. Interacts with DELE1. Interacts with NOA1. As to expression, ubiquitous.

The protein resides in the mitochondrion. The enzyme catalyses GTP + H2O = GDP + phosphate + H(+). In terms of biological role, as a component of the mitochondrial small ribosomal subunit, it plays a role in the translation of mitochondrial mRNAs. Involved in mediating interferon-gamma-induced cell death. Displays GTPase activity in vitro. The chain is Small ribosomal subunit protein mS29 from Homo sapiens (Human).